Here is a 232-residue protein sequence, read N- to C-terminus: Phosphatidylserine decarboxylase proenzyme (232 aa).

Serine 190 acts as the Schiff-base intermediate with substrate; via pyruvic acid in catalysis. Serine 190 carries the pyruvic acid (Ser); by autocatalysis modification.

The protein belongs to the phosphatidylserine decarboxylase family. PSD-A subfamily. As to quaternary structure, heterodimer of a large membrane-associated beta subunit and a small pyruvoyl-containing alpha subunit. Requires pyruvate as cofactor. In terms of processing, is synthesized initially as an inactive proenzyme. Formation of the active enzyme involves a self-maturation process in which the active site pyruvoyl group is generated from an internal serine residue via an autocatalytic post-translational modification. Two non-identical subunits are generated from the proenzyme in this reaction, and the pyruvate is formed at the N-terminus of the alpha chain, which is derived from the carboxyl end of the proenzyme. The post-translation cleavage follows an unusual pathway, termed non-hydrolytic serinolysis, in which the side chain hydroxyl group of the serine supplies its oxygen atom to form the C-terminus of the beta chain, while the remainder of the serine residue undergoes an oxidative deamination to produce ammonia and the pyruvoyl prosthetic group on the alpha chain.

The protein localises to the cell membrane. The enzyme catalyses a 1,2-diacyl-sn-glycero-3-phospho-L-serine + H(+) = a 1,2-diacyl-sn-glycero-3-phosphoethanolamine + CO2. The protein operates within phospholipid metabolism; phosphatidylethanolamine biosynthesis; phosphatidylethanolamine from CDP-diacylglycerol: step 2/2. Its function is as follows. Catalyzes the formation of phosphatidylethanolamine (PtdEtn) from phosphatidylserine (PtdSer). The protein is Phosphatidylserine decarboxylase proenzyme of Bradyrhizobium sp. (strain ORS 278).